A 392-amino-acid polypeptide reads, in one-letter code: Cobalt-precorrin-5B C(1)-methyltransferase (392 aa).

The protein belongs to the CbiD family.

The catalysed reaction is Co-precorrin-5B + S-adenosyl-L-methionine = Co-precorrin-6A + S-adenosyl-L-homocysteine. Its pathway is cofactor biosynthesis; adenosylcobalamin biosynthesis; cob(II)yrinate a,c-diamide from sirohydrochlorin (anaerobic route): step 6/10. In terms of biological role, catalyzes the methylation of C-1 in cobalt-precorrin-5B to form cobalt-precorrin-6A. The protein is Cobalt-precorrin-5B C(1)-methyltransferase of Pelobacter propionicus (strain DSM 2379 / NBRC 103807 / OttBd1).